The following is a 204-amino-acid chain: MKISKRQQDIYEFIKSEVKEKGYPPSVREIGEAVGLASSSTVHGHLARLEGKGLIRRDPTKPRAIEILSLEDEAETPNVVNIPIIGKVTAGMPITAIENIDEYFPLPEYMAAGETNVFMLEIDGESMINAGILDGDKVIVRQQSSAINGEIVVAMTDENEATCKRFYKEANHFRLQPENDALEPILLNNVTILGKVIGLYRDIR.

The H-T-H motif DNA-binding region spans 27–47 (VREIGEAVGLASSSTVHGHLA). Residues Ser126 and Lys164 each act as for autocatalytic cleavage activity in the active site.

The protein belongs to the peptidase S24 family. In terms of assembly, homodimer.

The catalysed reaction is Hydrolysis of Ala-|-Gly bond in repressor LexA.. Its function is as follows. Represses a number of genes involved in the response to DNA damage (SOS response), including recA and lexA. In the presence of single-stranded DNA, RecA interacts with LexA causing an autocatalytic cleavage which disrupts the DNA-binding part of LexA, leading to derepression of the SOS regulon and eventually DNA repair. This is LexA repressor from Listeria monocytogenes serotype 4b (strain CLIP80459).